The following is a 270-amino-acid chain: MSDHYAVVGNPIAHSKSPQIHTRFAAEVGADLHYHRLWAPEDHFAPVAEAFFAGGGHGLNVTVPFKGAAYTFADTLSDRARAAGAVNTLRAEPDGRHFGDNTDGIGLLRDLQTNHGIDLAGRRLLLLGAGGAARGVLHDLLGEDPRTVVIANRTVDRAEALAGNDHRIRACGFDVLAGERFEVVINTTAAGLQGEMPPLPDDLLAPGATAYDLVYADEDTPFMAWARARGAVTVCDGLGMLVEQAAESFYQWRGTYPQTAPVIEALRIGA.

Residues 15 to 17 (SKS) and T62 each bind shikimate. Residue K66 is the Proton acceptor of the active site. D78 provides a ligand contact to NADP(+). The shikimate site is built by N87 and D103. Residues 128-132 (GAGGA), 152-157 (NRTVDR), and L213 each bind NADP(+). Y215 lines the shikimate pocket. An NADP(+)-binding site is contributed by G237.

Belongs to the shikimate dehydrogenase family. In terms of assembly, homodimer.

The catalysed reaction is shikimate + NADP(+) = 3-dehydroshikimate + NADPH + H(+). It participates in metabolic intermediate biosynthesis; chorismate biosynthesis; chorismate from D-erythrose 4-phosphate and phosphoenolpyruvate: step 4/7. In terms of biological role, involved in the biosynthesis of the chorismate, which leads to the biosynthesis of aromatic amino acids. Catalyzes the reversible NADPH linked reduction of 3-dehydroshikimate (DHSA) to yield shikimate (SA). This chain is Shikimate dehydrogenase (NADP(+)), found in Halorhodospira halophila (strain DSM 244 / SL1) (Ectothiorhodospira halophila (strain DSM 244 / SL1)).